Reading from the N-terminus, the 101-residue chain is A-type ATP synthase subunit K (101 aa).

Helical transmembrane passes span A4 to A24, F32 to V52, and V75 to L95.

This sequence belongs to the V-ATPase proteolipid subunit family. Has multiple subunits with at least A(3), B(3), C, D, E, F, H, I and proteolipid K(x).

Its subcellular location is the cell membrane. In terms of biological role, component of the A-type ATP synthase that produces ATP from ADP in the presence of a proton gradient across the membrane. The sequence is that of A-type ATP synthase subunit K from Sulfolobus acidocaldarius (strain ATCC 33909 / DSM 639 / JCM 8929 / NBRC 15157 / NCIMB 11770).